The sequence spans 188 residues: Ras-related protein Rap-1 (188 aa).

12 to 19 is a GTP binding site; sequence GSGGVGKS. The short motif at 34 to 42 is the Effector region element; it reads YDPTIEDSY. Residues 59 to 63 and 118 to 121 each bind GTP; these read DTAGT and NKCD. Cys-185 bears the Cysteine methyl ester mark. Cys-185 carries the S-geranylgeranyl cysteine lipid modification. A propeptide spans 186 to 188 (removed in mature form); the sequence is ILL.

It belongs to the small GTPase superfamily. Ras family.

The protein resides in the cell membrane. It carries out the reaction GTP + H2O = GDP + phosphate + H(+). The chain is Ras-related protein Rap-1 (RAP1) from Physarum polycephalum (Slime mold).